We begin with the raw amino-acid sequence, 329 residues long: Prostaglandin reductase 1 (329 aa).

Position 18 is a phosphothreonine (Thr18). Phosphoserine is present on Ser20. NADP(+) contacts are provided by residues 152-155 (GAVG), Lys178, Tyr193, Asn217, 239-245 (CGAISVY), 270-272 (FIV), and Asn321. At Lys178 the chain carries N6-(2-hydroxyisobutyryl)lysine; alternate. Lys178 carries the post-translational modification N6-acetyllysine; alternate.

Belongs to the NADP-dependent oxidoreductase L4BD family. Monomer or homodimer. As to expression, detected in small intestine, kidney, liver, spleen and stomach (at protein level). Detected in small intestine, kidney and liver.

The protein resides in the cytoplasm. The enzyme catalyses 13,14-dihydro-15-oxo-prostaglandin E1 + NADP(+) = 15-oxoprostaglandin E1 + NADPH + H(+). It catalyses the reaction 13,14-dihydro-15-oxo-prostaglandin E2 + NAD(+) = 15-oxoprostaglandin E2 + NADH + H(+). The catalysed reaction is 13,14-dihydro-15-oxo-prostaglandin F1alpha + NADP(+) = 15-oxoprostaglandin F1alpha + NADPH + H(+). It carries out the reaction 13,14-dihydro-15-oxo-PGF2alpha + NADP(+) = 15-oxoprostaglandin F2alpha + NADPH + H(+). The enzyme catalyses leukotriene B4 + NADP(+) = 12-oxo-leukotriene B4 + NADPH + H(+). It catalyses the reaction 20-hydroxy-leukotriene B4 + NADP(+) = 12-oxo-20-hydroxy-leukotriene B4 + NADPH + H(+). The catalysed reaction is 6-trans-leukotriene B4 + NADP(+) = 12-oxo-(5S)-hydroxy-(6E,8E,10E,14Z)-eicosatetraenoate + NADPH + H(+). It carries out the reaction (5S,12S)-dihydroxy-(6E,10E,12E,14Z)-eicosatetraenoate + NADP(+) = 12-oxo-(5S)-hydroxy-(6E,8E,10E,14Z)-eicosatetraenoate + NADPH + H(+). The enzyme catalyses an n-alkanal + NADP(+) = an alk-2-enal + NADPH + H(+). It catalyses the reaction hexanal + NADP(+) = (E)-hex-2-enal + NADPH + H(+). The catalysed reaction is octanal + NADP(+) = (2E)-octenal + NADPH + H(+). It carries out the reaction decanal + NADP(+) = (2E)-decenal + NADPH + H(+). The enzyme catalyses dodecanal + NADP(+) = (2E)-dodecenal + NADPH + H(+). It catalyses the reaction 4-hydroxynonanal + NADP(+) = (E)-4-hydroxynon-2-enal + NADPH + H(+). The catalysed reaction is pentan-2-one + NADP(+) = (E)-pent-3-en-2-one + NADPH + H(+). It carries out the reaction nonan-2-one + NADP(+) = (3E)-nonen-2-one + NADPH + H(+). NAD(P)H-dependent oxidoreductase involved in metabolic inactivation of pro- and anti-inflammatory eicosanoids: prostaglandins (PG), leukotrienes (LT) and lipoxins (LX). Catalyzes with high efficiency the reduction of the 13,14 double bond of 15-oxoPGs, including 15-oxo-PGE1, 15-oxo-PGE2, 15-oxo-PGF1-alpha and 15-oxo-PGF2-alpha. Catalyzes with lower efficiency the oxidation of the hydroxyl group at C12 of LTB4 and its derivatives, converting them into biologically less active 12-oxo-LTB4 metabolites. Reduces 15-oxo-LXA4 to 13,14 dihydro-15-oxo-LXA4, enhancing neutrophil recruitment at the inflammatory site. Plays a role in metabolic detoxification of alkenals and ketones. Reduces alpha,beta-unsaturated alkenals and ketones, particularly those with medium-chain length, showing highest affinity toward (2E)-decenal and (3E)-3-nonen-2-one. May inactivate 4-hydroxy-2-nonenal, a cytotoxic lipid constituent of oxidized low-density lipoprotein particles. The sequence is that of Prostaglandin reductase 1 (Ptgr1) from Cavia porcellus (Guinea pig).